Consider the following 248-residue polypeptide: MSLVVLKLGGSVVTDKDEPETVDEAGLAAAADAVAPLAESRRVVVVHGGGSFGHHHAAEHGVSSESGSHDARGVRAIHDAMKRLNDAVLDALEERGVAALPVHPLSAGAREADGSLSLPLAATETMLDEGFVPVLHGDVISHAGKGATIVSGDDLVVSLASGLGADRVGLCSTVPGVLDADGDVIPEITAFADAADALGGSDSTDVTGGMAAKVRKLLALGAPAHVFGPEGLSAFVAGESPGTVIRGE.

ATP is bound at residue 7-11 (KLGGS). G49 serves as a coordination point for substrate. G50 lines the ATP pocket. Substrate-binding residues include H54 and G152. Residues G209 and K213 each coordinate ATP.

The protein belongs to the isopentenyl phosphate kinase family. As to quaternary structure, homodimer.

The enzyme catalyses isopentenyl phosphate + ATP = isopentenyl diphosphate + ADP. Functionally, catalyzes the phosphorylation of isopentenyl phosphate (IP) to isopentenyl diphosphate (IPP). Functions in an alternate mevalonate (MVA) pathway leading to IPP, a key precursor for the biosynthesis of isoprenoid compounds such as archaeal membrane lipids. The protein is Isopentenyl phosphate kinase of Haloferax volcanii (strain ATCC 29605 / DSM 3757 / JCM 8879 / NBRC 14742 / NCIMB 2012 / VKM B-1768 / DS2) (Halobacterium volcanii).